The following is a 62-amino-acid chain: ATP synthase subunit epsilon, mitochondrial (62 aa).

Position 52 is a phosphothreonine (T52).

Belongs to the eukaryotic ATPase epsilon family. In terms of assembly, F-type ATPases have 2 components, CF(1) - the catalytic core - and CF(0) - the membrane proton channel. CF(1) has five subunits: alpha(3), beta(3), gamma(1), delta(1), epsilon(1). CF(0) has three main subunits: a, b and c.

The protein resides in the mitochondrion. It localises to the mitochondrion inner membrane. Its function is as follows. Mitochondrial membrane ATP synthase (F(1)F(0) ATP synthase or Complex V) produces ATP from ADP in the presence of a proton gradient across the membrane which is generated by electron transport complexes of the respiratory chain. F-type ATPases consist of two structural domains, F(1) - containing the extramembraneous catalytic core, and F(0) - containing the membrane proton channel, linked together by a central stalk and a peripheral stalk. During catalysis, ATP synthesis in the catalytic domain of F(1) is coupled via a rotary mechanism of the central stalk subunits to proton translocation. Part of the complex F(1) domain and of the central stalk which is part of the complex rotary element. Rotation of the central stalk against the surrounding alpha(3)beta(3) subunits leads to hydrolysis of ATP in three separate catalytic sites on the beta subunits. This is ATP synthase subunit epsilon, mitochondrial (ATP15) from Saccharomyces cerevisiae (strain ATCC 204508 / S288c) (Baker's yeast).